We begin with the raw amino-acid sequence, 441 residues long: COP9 signalosome complex subunit 1 (441 aa).

A disordered region spans residues 1–28 (MERDEEASGPMMEMCTNGGEETSNRRPI). In terms of domain architecture, PCI spans 230–400 (KYKLAARKFL…KILYARHADQ (171 aa)).

The protein belongs to the CSN1 family. As to quaternary structure, component of the CSN complex, probably composed of CSN1, CSN2, CSN3, CSN4, CSN5 (CSN5A or CSN5B), CSN6 (CSN6A or CSN6B), CSN7 and CSN8. Interacts with itself and (via PCI domain) with CSN7 (via PCI domain). In the CSN complex, it probably interacts directly with CSN2, CSN3, CSN4 and CSN5B. Interacts with the 26S proteasome subunit RPN6. Interacts (via N-terminal domain) with TSA1 (via C-terminal domain). Binds to the translation initiation factors TIF3C1, TIF3E1 and TIF3H1. Expressed in leaves, flowers, immature siliques, and light-grown roots.

The protein localises to the cytoplasm. It is found in the nucleus. Component of the COP9 signalosome complex (CSN), a complex involved in various cellular and developmental processes such as photomorphogenesis and auxin and jasmonate responses. The CSN complex is an essential regulator of the ubiquitin (Ubl) conjugation pathway by mediating the deneddylation of the cullin subunits of SCF-type E3 ligase complexes, leading to decrease the Ubl ligase activity of SCF. It is involved in repression of photomorphogenesis in darkness by regulating the activity of COP1-containing Ubl ligase complexes. The complex is also required for degradation of IAA6 by regulating the activity of the Ubl ligase SCF-TIR complex. In the complex, it plays a central role in CSN assembly. This is COP9 signalosome complex subunit 1 (CSN1) from Arabidopsis thaliana (Mouse-ear cress).